The following is a 406-amino-acid chain: Vacuole membrane protein 1 (406 aa).

The span at 1 to 20 shows a compositional bias: basic and acidic residues; sequence MAENGKNCDQRRVAMNKEQH. The segment at 1–36 is disordered; sequence MAENGKNCDQRRVAMNKEQHNGNFTDPSSVNEKKRR. At Ala-2 the chain carries N-acetylalanine. The Cytoplasmic segment spans residues 2–43; sequence AENGKNCDQRRVAMNKEQHNGNFTDPSSVNEKKRREREERQN. Positions 21 to 30 are enriched in polar residues; it reads NGNFTDPSSV. Residues 44–64 form a helical membrane-spanning segment; the sequence is IVLWRQPLITLQYFSLEILVI. Over 65 to 77 the chain is Extracellular; that stretch reads LKEWTSKLWHRQS. A helical transmembrane segment spans residues 78 to 98; that stretch reads IVVSFLLLLAVLIATYYVEGA. Over 99–109 the chain is Cytoplasmic; the sequence is HQQYVQRIEKQ. Residues 110-130 form a helical membrane-spanning segment; the sequence is FLLYAYWIGLGILSSVGLGTG. The Extracellular segment spans residues 131–250; sequence LHTFLLYLGP…ASRAKLAVQK (120 aa). A VTT domain region spans residues 173 to 316; the sequence is GTEGTISLWS…FVIITFSKHI (144 aa). The helical transmembrane segment at 251–271 threads the bilayer; the sequence is LVQKVGFFGILACASIPNPLF. At 272–273 the chain is on the cytoplasmic side; that stretch reads DL. Residues 274–294 traverse the membrane as a helical segment; the sequence is AGITCGHFLVPFWTFFGATLI. At 295–305 the chain is on the extracellular side; sequence GKAIIKMHIQK. The helical transmembrane segment at 306 to 326 threads the bilayer; it reads IFVIITFSKHIVEQMVAFIGA. The Cytoplasmic segment spans residues 327-363; that stretch reads VPGIGPSLQKPFQEYLEAQRQKLHHKSEMGTPQGENW. A helical membrane pass occupies residues 364-384; that stretch reads LSWMFEKLVVVMVCYFILSII. The Extracellular segment spans residues 385–406; it reads NSMAQSYAKRIQQRLNSEEKTK.

Belongs to the VMP1 family. Interacts with BECN1. Interacts with TJP1. Interacts with TP53INP2. Interacts with TMEM41B. Interacts with ATP2A2, PLN and SLN; competes with PLN and SLN to prevent them from forming an inhibitory complex with ATP2A2. Interacts with ATG2A.

It localises to the endoplasmic reticulum-Golgi intermediate compartment membrane. Its subcellular location is the cell membrane. It is found in the vacuole membrane. The protein localises to the endoplasmic reticulum membrane. The catalysed reaction is a 1,2-diacyl-sn-glycero-3-phospho-L-serine(in) = a 1,2-diacyl-sn-glycero-3-phospho-L-serine(out). It carries out the reaction cholesterol(in) = cholesterol(out). It catalyses the reaction a 1,2-diacyl-sn-glycero-3-phosphocholine(in) = a 1,2-diacyl-sn-glycero-3-phosphocholine(out). The enzyme catalyses a 1,2-diacyl-sn-glycero-3-phosphoethanolamine(in) = a 1,2-diacyl-sn-glycero-3-phosphoethanolamine(out). Its function is as follows. Phospholipid scramblase involved in lipid homeostasis and membrane dynamics processes. Has phospholipid scramblase activity toward cholesterol and phosphatidylserine, as well as phosphatidylethanolamine and phosphatidylcholine. Required for autophagosome formation: participates in early stages of autophagosome biogenesis at the endoplasmic reticulum (ER) membrane by reequilibrating the leaflets of the ER as lipids are extracted by ATG2 (ATG2A or ATG2B) to mediate autophagosome assembly. Regulates ATP2A2 activity to control ER-isolation membrane contacts for autophagosome formation. In addition to autophagy, involved in other processes in which phospholipid scramblase activity is required. Modulates ER contacts with lipid droplets, mitochondria and endosomes. Plays an essential role in formation of cell junctions. Upon stress such as bacterial and viral infection, promotes formation of cytoplasmic vacuoles followed by cell death. Involved in the cytoplasmic vacuolization of acinar cells during the early stage of acute pancreatitis. The polypeptide is Vacuole membrane protein 1 (Pongo abelii (Sumatran orangutan)).